A 605-amino-acid polypeptide reads, in one-letter code: Dihydrogeodin oxidase (605 aa).

A signal peptide spans 1-18 (MPSLKDWVVAGLVPMTIA). N27, N107, and N112 each carry an N-linked (GlcNAc...) asparagine glycan. 3 consecutive Plastocyanin-like domains span residues 65 to 183 (TVTQ…GPSS), 189 to 347 (DLGP…YDES), and 424 to 567 (YVDW…KIKP). H117, H119, H161, and H163 together coordinate Cu cation. 2 N-linked (GlcNAc...) asparagine glycosylation sites follow: N278 and N467. The Cu cation site is built by H484, H487, H489, H543, C544, H545, and H549.

It belongs to the multicopper oxidase family. Cu cation serves as cofactor.

It catalyses the reaction 2 dihydrogeodin + O2 + 2 H(+) = 2 (+)-geodin + 2 H2O. It functions in the pathway secondary metabolite biosynthesis. Its function is as follows. Dihydrogeodin oxidase; part of the gene cluster that mediates the biosynthesis of geodin, an intermediate in the biosynthesis of other natural products. The pathway begins with the synthesis of atrochrysone thioester by the polyketide synthase (PKS) gedC. The atrochrysone carboxyl ACP thioesterase gedB then breaks the thioester bond and releases the atrochrysone carboxylic acid from gedC. The atrochrysone carboxylic acid is then converted to atrochrysone which is further transformed into emodinanthrone. The next step is performed by the emodinanthrone oxygenase gedH that catalyzes the oxidation of emodinanthrone to emodin. Emodin O-methyltransferase encoded probably by gedA then catalyzes methylation of the 8-hydroxy group of emodin to form questin. Ring cleavage of questin by questin oxidase gedK leads to desmethylsulochrin via several intermediates including questin epoxide. Another methylation step probably catalyzed by methyltransferase gedG leads to the formation of sulochrin which is further converted to dihydrogeodin by the sulochrin halogenase gedL. Finally, the dihydrogeodin oxidase gedJ catalyzes the stereospecific phenol oxidative coupling reaction converting dihydrogeodin to geodin. In Aspergillus terreus (strain NIH 2624 / FGSC A1156), this protein is Dihydrogeodin oxidase.